The following is a 216-amino-acid chain: Octanoyltransferase (216 aa).

Positions 32–211 (QEASEMLWFL…RFPYFLEALQ (180 aa)) constitute a BPL/LPL catalytic domain. Residues 71–78 (RGGRYTYH), 142–144 (AIG), and 155–157 (GFS) contribute to the substrate site. The Acyl-thioester intermediate role is filled by C173.

The protein belongs to the LipB family.

The protein resides in the cytoplasm. It carries out the reaction octanoyl-[ACP] + L-lysyl-[protein] = N(6)-octanoyl-L-lysyl-[protein] + holo-[ACP] + H(+). The protein operates within protein modification; protein lipoylation via endogenous pathway; protein N(6)-(lipoyl)lysine from octanoyl-[acyl-carrier-protein]: step 1/2. In terms of biological role, catalyzes the transfer of endogenously produced octanoic acid from octanoyl-acyl-carrier-protein onto the lipoyl domains of lipoate-dependent enzymes. Lipoyl-ACP can also act as a substrate although octanoyl-ACP is likely to be the physiological substrate. This chain is Octanoyltransferase, found in Zymomonas mobilis subsp. mobilis (strain ATCC 31821 / ZM4 / CP4).